A 501-amino-acid chain; its full sequence is Cytochrome P450 71B3 (501 aa).

Residues 2-22 form a helical membrane-spanning segment; sequence SILLYFFFLPVILSLIFMKKF. Cysteine 445 contacts heme.

It belongs to the cytochrome P450 family. The cofactor is heme.

It is found in the membrane. In Arabidopsis thaliana (Mouse-ear cress), this protein is Cytochrome P450 71B3 (CYP71B3).